A 650-amino-acid chain; its full sequence is Macrolide export ATP-binding/permease protein MacB (650 aa).

Positions 2–238 (IDIKGIRKSY…PTTAQEKRQE (237 aa)) constitute an ABC transporter domain. 38–45 (GPSGSGKS) lines the ATP pocket. 4 helical membrane-spanning segments follow: residues 267-287 (GLSM…LALG), 531-551 (IAAI…LVSV), 580-600 (IVVS…FSLL), and 610-630 (VVSA…GIVF).

The protein belongs to the ABC transporter superfamily. Macrolide exporter (TC 3.A.1.122) family. As to quaternary structure, homodimer.

Its subcellular location is the cell inner membrane. In terms of biological role, non-canonical ABC transporter that contains transmembrane domains (TMD), which form a pore in the inner membrane, and an ATP-binding domain (NBD), which is responsible for energy generation. Confers resistance against macrolides. This is Macrolide export ATP-binding/permease protein MacB from Bdellovibrio bacteriovorus (strain ATCC 15356 / DSM 50701 / NCIMB 9529 / HD100).